Here is a 353-residue protein sequence, read N- to C-terminus: Photosystem II protein D1 (353 aa).

At Thr2 the chain carries N-acetylthreonine. At Thr2 the chain carries Phosphothreonine. A run of 3 helical transmembrane segments spans residues 29 to 46 (YIGW…TATS), 118 to 133 (HFLL…EWEL), and 142 to 156 (WIAV…AATA). Residue His118 participates in chlorophyll a binding. Tyr126 is a binding site for pheophytin a. [CaMn4O5] cluster is bound by residues Asp170 and Glu189. Residues 197-218 (FHMLGVAGVFGGSLFSAMHGSL) traverse the membrane as a helical segment. A chlorophyll a-binding site is contributed by His198. Residues His215 and 264–265 (SF) each bind a quinone. His215 is a binding site for Fe cation. His272 lines the Fe cation pocket. A helical membrane pass occupies residues 274 to 288 (FLTAWPVVGIWFTAL). [CaMn4O5] cluster is bound by residues His332, Glu333, Asp342, and Ala344. Positions 345-353 (VVEAPSTNG) are excised as a propeptide.

The protein belongs to the reaction center PufL/M/PsbA/D family. PSII is composed of 1 copy each of membrane proteins PsbA, PsbB, PsbC, PsbD, PsbE, PsbF, PsbH, PsbI, PsbJ, PsbK, PsbL, PsbM, PsbT, PsbX, PsbY, PsbZ, Psb30/Ycf12, at least 3 peripheral proteins of the oxygen-evolving complex and a large number of cofactors. It forms dimeric complexes. It depends on The D1/D2 heterodimer binds P680, chlorophylls that are the primary electron donor of PSII, and subsequent electron acceptors. It shares a non-heme iron and each subunit binds pheophytin, quinone, additional chlorophylls, carotenoids and lipids. D1 provides most of the ligands for the Mn4-Ca-O5 cluster of the oxygen-evolving complex (OEC). There is also a Cl(-1) ion associated with D1 and D2, which is required for oxygen evolution. The PSII complex binds additional chlorophylls, carotenoids and specific lipids. as a cofactor. Post-translationally, tyr-161 forms a radical intermediate that is referred to as redox-active TyrZ, YZ or Y-Z. C-terminally processed by CTPA; processing is essential to allow assembly of the oxygen-evolving complex and thus photosynthetic growth.

It is found in the plastid. The protein localises to the chloroplast thylakoid membrane. It catalyses the reaction 2 a plastoquinone + 4 hnu + 2 H2O = 2 a plastoquinol + O2. In terms of biological role, photosystem II (PSII) is a light-driven water:plastoquinone oxidoreductase that uses light energy to abstract electrons from H(2)O, generating O(2) and a proton gradient subsequently used for ATP formation. It consists of a core antenna complex that captures photons, and an electron transfer chain that converts photonic excitation into a charge separation. The D1/D2 (PsbA/PsbD) reaction center heterodimer binds P680, the primary electron donor of PSII as well as several subsequent electron acceptors. The chain is Photosystem II protein D1 from Aethionema cordifolium (Lebanon stonecress).